The chain runs to 207 residues: Protein-L-isoaspartate O-methyltransferase (207 aa).

The active site involves Ser-56.

Belongs to the methyltransferase superfamily. L-isoaspartyl/D-aspartyl protein methyltransferase family.

Its subcellular location is the cytoplasm. The catalysed reaction is [protein]-L-isoaspartate + S-adenosyl-L-methionine = [protein]-L-isoaspartate alpha-methyl ester + S-adenosyl-L-homocysteine. Catalyzes the methyl esterification of L-isoaspartyl residues in peptides and proteins that result from spontaneous decomposition of normal L-aspartyl and L-asparaginyl residues. It plays a role in the repair and/or degradation of damaged proteins. In Pyrobaculum neutrophilum (strain DSM 2338 / JCM 9278 / NBRC 100436 / V24Sta) (Thermoproteus neutrophilus), this protein is Protein-L-isoaspartate O-methyltransferase.